A 180-amino-acid polypeptide reads, in one-letter code: Putative 5'(3')-deoxyribonucleotidase (180 aa).

Residue Asp9 is the Nucleophile of the active site. Asp9, Asp11, and Asp135 together coordinate Mg(2+). The active-site Proton donor is Asp11.

The protein belongs to the 5'(3')-deoxyribonucleotidase family. Mg(2+) serves as cofactor.

Dephosphorylates the 5' and 2'(3')-phosphates of deoxyribonucleotides. This is Putative 5'(3')-deoxyribonucleotidase from Staphylococcus aureus (strain MSSA476).